Reading from the N-terminus, the 182-residue chain is ATP-dependent protease subunit HslV (182 aa).

T10 is an active-site residue. Na(+) is bound by residues A166, C169, and S172.

It belongs to the peptidase T1B family. HslV subfamily. In terms of assembly, a double ring-shaped homohexamer of HslV is capped on each side by a ring-shaped HslU homohexamer. The assembly of the HslU/HslV complex is dependent on binding of ATP.

The protein resides in the cytoplasm. It carries out the reaction ATP-dependent cleavage of peptide bonds with broad specificity.. With respect to regulation, allosterically activated by HslU binding. Protease subunit of a proteasome-like degradation complex believed to be a general protein degrading machinery. The sequence is that of ATP-dependent protease subunit HslV from Rickettsia prowazekii (strain Madrid E).